The following is a 367-amino-acid chain: MDIQMFTTLNSTVPTEPVVGPVEPTVPTVPATKETGPSSSAECSTQPAVAEQEDNSLLAQLLKGKITSDDAKLQPPRGPFEYAPMLSEEAQFAIKLAGLLNPNPVTEQDPSTFKPPPKMSNNVRKNINLTPVIENAVPSGFELESPKDQAFDVVHGRLSMGQNQTCYFVTVEEMRRRLQSPEKLNSSSIACNLKRPKLKNGGELMRAQLRDHGIKVQLNAKQKAFPNKVIALVEAEAVHLGLDLGTAVRDDYPVQDIIQEVAHEALADEDADLDALMNDKDFTECMSALESVFTSVVPPITGIEPKPSNNMRLNNGMETFSSASHGLGIVSQRVWLPQLTAIGNGVASELRRLTETPTESKPEELKA.

Residues 29 to 49 (VPATKETGPSSSAECSTQPAV) form a disordered region. A compositionally biased stretch (polar residues) spans 36-47 (GPSSSAECSTQP). An H-S-H (helix-span-helix), dimerization region spans residues 220–354 (AKQKAFPNKV…GVASELRRLT (135 aa)).

The protein belongs to the AP-2 family. As to quaternary structure, binds DNA as a dimer.

The protein resides in the nucleus. It is found in the cytoplasm. Functionally, sequence-specific DNA-binding protein that interacts with enhancer elements to regulate transcription of selected genes. Required for neuroblast and epidermal morphogenesis, perhaps acting in cooperation with transcription factor aptf-4. This chain is Transcription factor aptf-2, found in Caenorhabditis elegans.